We begin with the raw amino-acid sequence, 756 residues long: Neutral ceramidase (756 aa).

Topologically, residues 1–11 (MAKRTFSTLEA) are cytoplasmic. A helical; Signal-anchor for type II membrane protein transmembrane segment spans residues 12–32 (FLIFLLVIMTVITVALLTLLF). The Lumenal portion of the chain corresponds to 33-756 (VTSGTIENHK…ISSPFEVVTT (724 aa)). O-linked (GalNAc...) threonine glycosylation is found at Thr56, Thr57, Thr58, and Thr64. Position 110 (Leu110) interacts with Ca(2+). A Zn(2+)-binding site is contributed by His170. N-linked (GlcNAc...) asparagine glycosylation occurs at Asn193. His279 lines the Zn(2+) pocket. The Nucleophile role is filled by Ser330. Disulfide bonds link Cys338–Cys352 and Cys345–Cys360. 2 N-linked (GlcNAc...) asparagine glycosylation sites follow: Asn407 and Asn444. An intrachain disulfide couples Cys424 to Cys474. Glu516 and Tyr555 together coordinate Zn(2+). Ca(2+) contacts are provided by Asp688, Ser690, and Thr693. A required for correct folding and localization region spans residues 746–756 (GISSPFEVVTT).

The protein belongs to the neutral ceramidase family. In terms of assembly, may interact with CAV1. Zn(2+) serves as cofactor. In terms of processing, proteolytic cleavage of the N-terminus removes the signal-anchor and produces a soluble form of the protein. N-glycosylated. Required for enzyme activity. Post-translationally, O-glycosylated. Required to retain it as a type II membrane protein at the cell surface. In terms of processing, phosphorylated. May prevent ubiquitination and subsequent degradation. Ubiquitinated, leading to its degradation by the proteasome. Ubiquitination is triggered by nitric oxide. Widely expressed. Strongly expressed in small intestine and to a lower extent in liver and kidney. Highly expressed in duodenum, jejunum and ileum along the brush border of the small intestine (at protein level).

The protein localises to the cell membrane. The protein resides in the membrane raft. It is found in the membrane. It localises to the caveola. Its subcellular location is the golgi apparatus membrane. The protein localises to the mitochondrion. The protein resides in the secreted. It is found in the extracellular exosome. It carries out the reaction an N-acylsphing-4-enine + H2O = sphing-4-enine + a fatty acid. The catalysed reaction is N-hexadecanoylsphing-4-enine + H2O = sphing-4-enine + hexadecanoate. The enzyme catalyses N-dodecanoylsphing-4-enine + H2O = dodecanoate + sphing-4-enine. It catalyses the reaction N-octadecanoylsphing-4-enine + H2O = sphing-4-enine + octadecanoate. It carries out the reaction N-octanoylsphing-4-enine + H2O = octanoate + sphing-4-enine. The catalysed reaction is N-(hexanoyl)sphing-4-enine + H2O = hexanoate + sphing-4-enine. The enzyme catalyses N-tetradecanoylsphing-4-enine + H2O = tetradecanoate + sphing-4-enine. It catalyses the reaction N-(9Z-octadecenoyl)-sphing-4-enine + H2O = sphing-4-enine + (9Z)-octadecenoate. It carries out the reaction N-(15Z-tetracosenoyl)-sphing-4-enine + H2O = (15Z)-tetracosenoate + sphing-4-enine. The catalysed reaction is sphinganine + hexadecanoate = N-hexadecanoylsphinganine + H2O. The enzyme catalyses N-(octadecanoyl)-sphinganine + H2O = sphinganine + octadecanoate. The protein operates within lipid metabolism; sphingolipid metabolism. With respect to regulation, inhibited by D-erythro-MAPP. Plasma membrane ceramidase that hydrolyzes sphingolipid ceramides into sphingosine and free fatty acids at neutral pH. Ceramides, sphingosine, and its phosphorylated form sphingosine-1-phosphate are bioactive lipids that mediate cellular signaling pathways regulating several biological processes including cell proliferation, apoptosis and differentiation. Also catalyzes the reverse reaction allowing the synthesis of ceramides from fatty acids and sphingosine. Together with sphingomyelinase, participates in the production of sphingosine and sphingosine-1-phosphate from the degradation of sphingomyelin, a sphingolipid enriched in the plasma membrane of cells. Also participates in the hydrolysis of ceramides from the extracellular milieu allowing the production of sphingosine-1-phosphate inside and outside cells. This is the case for instance with the digestion of dietary sphingolipids in the intestinal tract. This chain is Neutral ceramidase (Asah2), found in Mus musculus (Mouse).